Consider the following 249-residue polypeptide: Type I iodothyronine deiodinase (249 aa).

At 1–12 (MGLPRPGLWLKR) the chain is on the extracellular side. The chain crosses the membrane as a helical; Signal-anchor for type III membrane protein span at residues 13–33 (LWVLVQVAVEVAVGKVLMTLF). The Cytoplasmic segment spans residues 34 to 249 (PERVKQNILA…VRAVLEELHS (216 aa)). Sec126 is a catalytic residue. Position 126 (Sec126) is a non-standard amino acid, selenocysteine.

This sequence belongs to the iodothyronine deiodinase family. In terms of assembly, predominantly monomer. Can form homodimers but homodimerization is not essential for enzyme activity.

It is found in the cell membrane. The protein localises to the endoplasmic reticulum membrane. Its subcellular location is the basolateral cell membrane. The catalysed reaction is 3,3',5-triiodo-L-thyronine + iodide + A + H(+) = L-thyroxine + AH2. It carries out the reaction 3,3',5'-triiodo-L-thyronine + iodide + A + H(+) = L-thyroxine + AH2. It catalyses the reaction 3,3'-diiodo-L-thyronine + iodide + A + H(+) = 3,3',5'-triiodo-L-thyronine + AH2. The enzyme catalyses 3,3'-diiodo-L-thyronine + iodide + A + H(+) = 3,3',5-triiodo-L-thyronine + AH2. The catalysed reaction is 3'-iodo-L-thyronine + iodide + A + H(+) = 3',5'-diiodo-L-thyronine + AH2. It carries out the reaction 3-iodo-L-thyronine + iodide + A + H(+) = 3,5-diiodo-L-thyronine + AH2. It catalyses the reaction 3-iodo-L-thyronine + iodide + A + H(+) = 3,3'-diiodo-L-thyronine + AH2. The enzyme catalyses 3,3'-diiodothyronamine + iodide + A + H(+) = 3,3',5'-triiodothyronamine + AH2. The catalysed reaction is 3'-iodothyronamine + iodide + A + H(+) = 3',5'-diiodothyronamine + AH2. It carries out the reaction 3-iodothyronamine + iodide + A + H(+) = 3,3'-diiodothyronamine + AH2. It catalyses the reaction 3,3'-diiodothyronamine + iodide + A + H(+) = 3,3',5-triiodothyronamine + AH2. The enzyme catalyses 3-iodothyronamine + iodide + A + H(+) = 3,5-diiodothyronamine + AH2. The catalysed reaction is 3,3'-diiodo-L-thyronine sulfate + iodide + A + H(+) = 3,3',5'-triiodo-L-thyronine sulfate + AH2. It carries out the reaction 3,3',5'-triiodo-L-thyronine sulfate + iodide + A + H(+) = L-thyroxine sulfate + AH2. It catalyses the reaction 3,3'-diiodo-L-thyronine sulfate + iodide + A + H(+) = 3,3',5-triiodo-L-thyronine sulfate + AH2. Functionally, plays a crucial role in the metabolism of thyroid hormones (TH) and has specific roles in TH activation and inactivation by deiodination. Catalyzes the deiodination of L-thyroxine (T4) to 3,5,3'-triiodothyronine (T3) via outer-ring deiodination (ORD) and of T4 to 3,3',5'-triiodothyronine (rT3) via inner-ring deiodination (IRD). Catalyzes the deiodiantion of rT3 to 3,3'-diiodothyronine (3,3'-T2) and 3',5'-diiodothyronine (3',5'-T2) to 3'-monoiodothyronine (3'-T1) via ORD. Catalyzes the deiodination of T3 to 3,3'-T2, 3,5-diiodothyronine (3,5-T2) to 3-monoiodothyronine (3-T1) and 3,3'-T2 to 3-T1 via IRD. Catalyzes the phenolic ring deiodinations of 3,3',5'-triiodothyronamine, 3',5'-diiodothyronamine and 3,3'-diiodothyronamine as well as tyrosyl ring deiodinations of 3,5,3'-triiodothyronamine and 3,5-diiodothyronamine. Catalyzes the deiodination of L-thyroxine sulfate and 3,3',5-triiodo-L-thyronine sulfate via IRD and of 3,3',5'-triiodo-L-thyronine sulfate via ORD. This Oryctolagus cuniculus (Rabbit) protein is Type I iodothyronine deiodinase (DIO1).